The chain runs to 512 residues: Endoglucanase 14 (512 aa).

The N-terminal stretch at Met1–Gly22 is a signal peptide. The N-linked (GlcNAc...) asparagine glycan is linked to Asn76. Asp103 (nucleophile) is an active-site residue. 2 N-linked (GlcNAc...) asparagine glycosylation sites follow: Asn192 and Asn215. Catalysis depends on residues His433, Asp484, and Glu493.

It belongs to the glycosyl hydrolase 9 (cellulase E) family.

The protein localises to the secreted. The enzyme catalyses Endohydrolysis of (1-&gt;4)-beta-D-glucosidic linkages in cellulose, lichenin and cereal beta-D-glucans.. This is Endoglucanase 14 from Oryza sativa subsp. japonica (Rice).